A 196-amino-acid chain; its full sequence is Probable nicotinate-nucleotide adenylyltransferase (196 aa).

It belongs to the NadD family.

It carries out the reaction nicotinate beta-D-ribonucleotide + ATP + H(+) = deamido-NAD(+) + diphosphate. It functions in the pathway cofactor biosynthesis; NAD(+) biosynthesis; deamido-NAD(+) from nicotinate D-ribonucleotide: step 1/1. In terms of biological role, catalyzes the reversible adenylation of nicotinate mononucleotide (NaMN) to nicotinic acid adenine dinucleotide (NaAD). The sequence is that of Probable nicotinate-nucleotide adenylyltransferase from Caldicellulosiruptor saccharolyticus (strain ATCC 43494 / DSM 8903 / Tp8T 6331).